Consider the following 104-residue polypeptide: MSEFSNVTVVKEANIFFDGGVTSRTIIFSSGSKKTLGIMMPGEYVFNTAGAELMEILSGDLEVQIAGIDSWKPVKGGESFEVPASSSFRMKVKTVTDYCCSFLA.

It belongs to the nucleoside phosphorylase PpnP family.

The enzyme catalyses a purine D-ribonucleoside + phosphate = a purine nucleobase + alpha-D-ribose 1-phosphate. It catalyses the reaction adenosine + phosphate = alpha-D-ribose 1-phosphate + adenine. The catalysed reaction is cytidine + phosphate = cytosine + alpha-D-ribose 1-phosphate. It carries out the reaction guanosine + phosphate = alpha-D-ribose 1-phosphate + guanine. The enzyme catalyses inosine + phosphate = alpha-D-ribose 1-phosphate + hypoxanthine. It catalyses the reaction thymidine + phosphate = 2-deoxy-alpha-D-ribose 1-phosphate + thymine. The catalysed reaction is uridine + phosphate = alpha-D-ribose 1-phosphate + uracil. It carries out the reaction xanthosine + phosphate = alpha-D-ribose 1-phosphate + xanthine. Functionally, catalyzes the phosphorolysis of diverse nucleosides, yielding D-ribose 1-phosphate and the respective free bases. Can use uridine, adenosine, guanosine, cytidine, thymidine, inosine and xanthosine as substrates. Also catalyzes the reverse reactions. This Geotalea daltonii (strain DSM 22248 / JCM 15807 / FRC-32) (Geobacter daltonii) protein is Pyrimidine/purine nucleoside phosphorylase.